The chain runs to 460 residues: Chromosomal replication initiator protein DnaA (460 aa).

Residues 1–83 (MENIWLEAQT…EFHVADEKPE (83 aa)) are domain I, interacts with DnaA modulators. Residues 78 to 121 (ADEKPEAAPEEKPEKEGKPAREKEKDKDKEKEKDREKEKDKKEL) show a composition bias toward basic and acidic residues. The interval 78–122 (ADEKPEAAPEEKPEKEGKPAREKEKDKDKEKEKDREKEKDKKELV) is disordered. The segment at 83 to 123 (EAAPEEKPEKEGKPAREKEKDKDKEKEKDREKEKDKKELVP) is domain II. Residues 124-340 (NLNPKYTFES…GMLIRLEAFA (217 aa)) form a domain III, AAA+ region region. 4 residues coordinate ATP: Gly-168, Gly-170, Lys-171, and Thr-172. The interval 341 to 460 (SLTGQEITLS…VEDIRKKLFT (120 aa)) is domain IV, binds dsDNA.

Belongs to the DnaA family. As to quaternary structure, oligomerizes as a right-handed, spiral filament on DNA at oriC.

It localises to the cytoplasm. In terms of biological role, plays an essential role in the initiation and regulation of chromosomal replication. ATP-DnaA binds to the origin of replication (oriC) to initiate formation of the DNA replication initiation complex once per cell cycle. Binds the DnaA box (a 9 base pair repeat at the origin) and separates the double-stranded (ds)DNA. Forms a right-handed helical filament on oriC DNA; dsDNA binds to the exterior of the filament while single-stranded (ss)DNA is stabiized in the filament's interior. The ATP-DnaA-oriC complex binds and stabilizes one strand of the AT-rich DNA unwinding element (DUE), permitting loading of DNA polymerase. After initiation quickly degrades to an ADP-DnaA complex that is not apt for DNA replication. Binds acidic phospholipids. The protein is Chromosomal replication initiator protein DnaA of Geobacter sp. (strain M21).